Reading from the N-terminus, the 157-residue chain is Phosphopantetheine adenylyltransferase (157 aa).

Ser8 lines the substrate pocket. Residues 8-9 (SF) and His16 each bind ATP. Substrate contacts are provided by Lys40, Leu72, and Arg86. ATP-binding positions include 87-89 (GLR), Glu97, and 121-127 (FGTISSS).

Belongs to the bacterial CoaD family. In terms of assembly, homohexamer. Mg(2+) is required as a cofactor.

The protein resides in the cytoplasm. The catalysed reaction is (R)-4'-phosphopantetheine + ATP + H(+) = 3'-dephospho-CoA + diphosphate. Its pathway is cofactor biosynthesis; coenzyme A biosynthesis; CoA from (R)-pantothenate: step 4/5. In terms of biological role, reversibly transfers an adenylyl group from ATP to 4'-phosphopantetheine, yielding dephospho-CoA (dPCoA) and pyrophosphate. This is Phosphopantetheine adenylyltransferase from Cutibacterium acnes (strain DSM 16379 / KPA171202) (Propionibacterium acnes).